The primary structure comprises 514 residues: Pantetheinase (514 aa).

Positions 1–22 (MITSRLLVYVAVLVLCVIKVSS) are cleaved as a signal peptide. The N-linked (GlcNAc...) asparagine glycan is linked to Asn-39. The 268-residue stretch at 40-307 (ATLVPVSHEE…GKLLLSQLDS (268 aa)) folds into the CN hydrolase domain. Catalysis depends on Glu-80, which acts as the Proton acceptor. Residues Asn-87 and Asn-147 are each glycosylated (N-linked (GlcNAc...) asparagine). The active-site Proton donor is the Lys-179. Catalysis depends on Cys-212, which acts as the Nucleophile. N-linked (GlcNAc...) asparagine glycans are attached at residues Asn-316 and Asn-354. Asp-492 carries GPI-anchor amidated aspartate lipidation. A propeptide spans 493-514 (PRSQVPGVMLLVIIPIVCSLSW) (removed in mature form).

Belongs to the carbon-nitrogen hydrolase superfamily. BTD/VNN family. As to quaternary structure, monomer.

The protein localises to the cell membrane. It catalyses the reaction (R)-pantetheine + H2O = cysteamine + (R)-pantothenate. Functionally, amidohydrolase that hydrolyzes specifically one of the carboamide linkages in D-pantetheine thus recycling pantothenic acid (vitamin B5) and releasing cysteamine. This is Pantetheinase (VNN1) from Canis lupus familiaris (Dog).